Consider the following 419-residue polypeptide: Ribosomal RNA large subunit methyltransferase G (419 aa).

Residues 386–408 (KAEPFETHPTEAEAKVEVTESKP) are compositionally biased toward basic and acidic residues. A disordered region spans residues 386–419 (KAEPFETHPTEAEAKVEVTESKPHPQSSLYGTKK). A compositionally biased stretch (polar residues) spans 409–419 (HPQSSLYGTKK).

This sequence belongs to the methyltransferase superfamily. RlmG family.

Its subcellular location is the cytoplasm. The enzyme catalyses guanosine(1835) in 23S rRNA + S-adenosyl-L-methionine = N(2)-methylguanosine(1835) in 23S rRNA + S-adenosyl-L-homocysteine + H(+). Specifically methylates the guanine in position 1835 (m2G1835) of 23S rRNA. The protein is Ribosomal RNA large subunit methyltransferase G of Shewanella woodyi (strain ATCC 51908 / MS32).